The primary structure comprises 58 residues: Apelin receptor early endogenous ligand (58 aa).

Residues 1 to 22 (MRFFHPLYLLLLLLTVLVLISA) form the signal peptide.

The protein belongs to the Elabela/Toddler family. Interacts with aplnra and aplnrb. In terms of tissue distribution, expressed ubiquitously during late blastula and gastrula stages and becomes restricted to the lateral mesoderm, endoderm, and anterior and posterior notochord after gastrulation.

It localises to the secreted. The protein resides in the extracellular space. Its function is as follows. Peptide hormone that functions as endogenous ligand for the G-protein-coupled apelin receptor (aplnra and/or aplnrb), that plays a role in the regulation of normal cardiovascular function and fluid homeostasis. Functions as a balanced agonist activating both G(i) protein pathway and beta-arrestin pathway of APLNR. Downstream G proteins activation, apelin can inhibit cAMP production and activate key intracellular effectors such as ERKs. On the other hand, APLNR activation induces beta-arrestin recruitment to the membrane leading to desensitization and internalization of the receptor. Required for mesendodermal differentiation, blood vessels formation and heart morphogenesis during early development and for adult cardiovascular homeostasis. Acts as a motogen by promoting mesendodermal cell migration during gastrulation by binding and activating the apelin receptor. Acts as an early embryonic regulator of cellular movement with a role in migration and development of cardiac progenitor cells. May act as a chemoattractant for the activation of angioblast migration toward the embryonic midline, i.e. the position of the future vessel formation, during vasculogenesis. Positively regulates sinus venosus (SV)-derived endothelial cells migration into the developing heart to promote coronary blood vessel sprouting. Involved in cardioprotective functions during heart failure. Mediates myocardial contractility in an ERK1/2-dependent manner. The chain is Apelin receptor early endogenous ligand from Danio rerio (Zebrafish).